The sequence spans 1894 residues: Plexin-A2 (1894 aa).

The N-terminal stretch at 1 to 34 is a signal peptide; it reads MEQRRFYLRAMQADNLSVVLLSVAWLLLARGTTG. N-linked (GlcNAc...) asparagine glycans are attached at residues N15 and N76. The Sema domain occupies 35–508; the sequence is MPQYSTFHSE…SERQVTRVPV (474 aa). Residues 35–1237 lie on the Extracellular side of the membrane; that stretch reads MPQYSTFHSE…VISDSLLTLP (1203 aa). 2 cysteine pairs are disulfide-bonded: C94-C103 and C129-C137. N-linked (GlcNAc...) asparagine glycans are attached at residues N163 and N327. 8 disulfides stabilise this stretch: C284–C405, C300–C356, C374–C393, C511–C528, C517–C559, C520–C537, C531–C543, and C594–C613. Residues N598, N696, and N756 are each glycosylated (N-linked (GlcNAc...) asparagine). IPT/TIG domains are found at residues 858–951, 954–1037, 1041–1139, and 1143–1228; these read PQIT…QYTF, PSVL…QFEY, PRVQ…KFIY, and PTFE…SVSV. 2 N-linked (GlcNAc...) asparagine glycosylation sites follow: N1180 and N1205. Residues 1238 to 1258 traverse the membrane as a helical segment; sequence AIISIAAGGSLLLIIVIIVLI. The Cytoplasmic segment spans residues 1259 to 1894; sequence AYKRKSREND…HLINAMSIES (636 aa). Residues 1261–1310 adopt a coiled-coil conformation; sequence KRKSRENDLTLKRLQMQMDNLESRVALECKEAFAELQTDINELTSDLDRS. S1612 bears the Phosphoserine mark.

Belongs to the plexin family. In terms of assembly, homodimer. Interacts with RND1. Interacts directly with NRP1 and NRP2. The PLXNA2 homodimer interacts with a SEMA6A homodimer, giving rise to a heterotetramer.

It is found in the cell membrane. In terms of biological role, coreceptor for SEMA3A and SEMA6A. Necessary for signaling by SEMA6A and class 3 semaphorins and subsequent remodeling of the cytoskeleton. Plays a role in axon guidance, invasive growth and cell migration. Class 3 semaphorins bind to a complex composed of a neuropilin and a plexin. The plexin modulates the affinity of the complex for specific semaphorins, and its cytoplasmic domain is required for the activation of down-stream signaling events in the cytoplasm. The chain is Plexin-A2 (Plxna2) from Mus musculus (Mouse).